A 310-amino-acid polypeptide reads, in one-letter code: Putative HTH-type transcriptional regulatory protein SSO0942 (310 aa).

In terms of domain architecture, HTH cro/C1-type spans 125–180 (LKHKREEMGYSIGDVAKFLGVSRKAIYDYEKGDSDVSLEVAEKLIDLFGDDIIGDV). The H-T-H motif DNA-binding region spans 136–155 (IGDVAKFLGVSRKAIYDYEK).

The polypeptide is Putative HTH-type transcriptional regulatory protein SSO0942 (Saccharolobus solfataricus (strain ATCC 35092 / DSM 1617 / JCM 11322 / P2) (Sulfolobus solfataricus)).